The chain runs to 312 residues: Ribosomal protein uL3 glutamine methyltransferase (312 aa).

Belongs to the protein N5-glutamine methyltransferase family. PrmB subfamily.

It carries out the reaction L-glutaminyl-[ribosomal protein uL3] + S-adenosyl-L-methionine = N(5)-methyl-L-glutaminyl-[ribosomal protein uL3] + S-adenosyl-L-homocysteine + H(+). In terms of biological role, methylates large ribosomal subunit protein uL3 on a specific glutamine residue. The chain is Ribosomal protein uL3 glutamine methyltransferase from Xylella fastidiosa (strain Temecula1 / ATCC 700964).